Reading from the N-terminus, the 297-residue chain is Phosphatidylinositol N-acetylglucosaminyltransferase subunit C (297 aa).

4 consecutive transmembrane segments (helical) span residues 67–87, 88–108, 153–173, and 239–259; these read VFVV…WLFG, TGLA…GGEG, AVFM…AAIV, and ALGG…LLLI.

Belongs to the PIGC family. In terms of assembly, component of the glycosylphosphatidylinositol-N-acetylglucosaminyltransferase (GPI-GnT) complex composed at least by PIGA, PIGC, PIGH, PIGP, PIGQ, PIGY and DPM2. Interacts with PIGQ. Interacts with the heterodimer PIGA:PIGH.

It localises to the endoplasmic reticulum membrane. Its pathway is glycolipid biosynthesis; glycosylphosphatidylinositol-anchor biosynthesis. In terms of biological role, part of the glycosylphosphatidylinositol-N-acetylglucosaminyltransferase (GPI-GnT) complex that catalyzes the transfer of N-acetylglucosamine from UDP-N-acetylglucosamine to phosphatidylinositol and participates in the first step of GPI biosynthesis. In Bos taurus (Bovine), this protein is Phosphatidylinositol N-acetylglucosaminyltransferase subunit C.